Reading from the N-terminus, the 618-residue chain is Grainyhead-like protein 1 homolog (618 aa).

A transcription activation region spans residues 1–91 (MTQEYDNKRP…EVEHPEPDHS (91 aa)). Positions 74 to 92 (RRSSTAKPEVEHPEPDHSK) are enriched in basic and acidic residues. A disordered region spans residues 74-94 (RRSSTAKPEVEHPEPDHSKRN). Thr208 is subject to Phosphothreonine. A Grh/CP2 DB domain is found at 248 to 474 (SGNNFEYTLE…DLDTQPVLFI (227 aa)). Interaction with DNA regions lie at residues 380–389 (TDFSSQKGVK) and 427–430 (RKIR).

Belongs to the grh/CP2 family. Grainyhead subfamily. In terms of assembly, binds DNA as homodimer. Homodimer, also forms heterodimers with GRHL2 or GRHL3. Methylation at Arg-9 and Lys-116 may be involved in regulating transcriptional activation.

The protein localises to the nucleus. Functionally, transcription factor involved in epithelial development. Binds directly to the consensus DNA sequence 5'-AACCGGTT-3'. Important regulator of DSG1 in the context of hair anchorage and epidermal differentiation, participates in the maintenance of the skin barrier. There is no genetic interaction with GRHL3, nor functional cooperativity due to diverse target gene selectivity during epithelia development. May play a role in regulating glucose homeostasis and insulin signaling. The chain is Grainyhead-like protein 1 homolog (GRHL1) from Pongo abelii (Sumatran orangutan).